The sequence spans 188 residues: V-type proton ATPase subunit E (188 aa).

This sequence belongs to the V-ATPase E subunit family.

Its function is as follows. Produces ATP from ADP in the presence of a proton gradient across the membrane. The sequence is that of V-type proton ATPase subunit E from Dictyoglomus thermophilum (strain ATCC 35947 / DSM 3960 / H-6-12).